The chain runs to 520 residues: MGPQRRLSPAGAALLWGFLLQLTAAQEAILHASGNGTTKDYCMLYNPYWTALPSTLENATSISLMNLTSTPLCNLSDIPPVGIKSKAVVVPWGSCHFLEKARIAQKGGAEAMLVVNNSVLFPPSGNRSEFPDVKILIAFISYKDFRDMNQTLGDNITVKMYSPSWPNFDYTMVVIFVIAVFTVALGGYWSGLVELENLKAVTTEDREMRKKKEEYLTFSPLTVVIFVVICCVMMVLLYFFYKWLVYVMIAIFCIASAMSLYNCLAALIHKIPYGQCTIACRGKNMEVRLIFLSGLCIAVAVVWAVFRNEDRWAWILQDILGIAFCLNLIKTLKLPNFKSCVILLGLLLLYDVFFVFITPFITKNGESIMVELAAGPFGNNEKLPVVIRVPKLIYFSVMSVCLMPVSILGFGDIIVPGLLIAYCRRFDVQTGSSYIYYVSSTVAYAIGMILTFVVLVLMKKGQPALLYLVPCTLITASVVAWRRKEMKKFWKGNSYQMMDHLDCATNEENPVISGEQIVQQ.

The signal sequence occupies residues 1 to 25 (MGPQRRLSPAGAALLWGFLLQLTAA). Over 26–172 (QEAILHASGN…PSWPNFDYTM (147 aa)) the chain is Lumenal. 6 N-linked (GlcNAc...) asparagine glycosylation sites follow: Asn58, Asn66, Asn74, Asn116, Asn126, and Asn149. The region spanning 63–151 (SLMNLTSTPL…YKDFRDMNQT (89 aa)) is the PA domain. Residue Asn155 is glycosylated (N-linked (GlcNAc...) (complex) asparagine). The helical transmembrane segment at 173 to 193 (VVIFVIAVFTVALGGYWSGLV) threads the bilayer. Topologically, residues 194-220 (ELENLKAVTTEDREMRKKKEEYLTFSP) are cytoplasmic. The chain crosses the membrane as a helical span at residues 221-241 (LTVVIFVVICCVMMVLLYFFY). Topologically, residues 242–247 (KWLVYV) are lumenal. Residues 248 to 268 (MIAIFCIASAMSLYNCLAALI) traverse the membrane as a helical segment. Residues 269–285 (HKIPYGQCTIACRGKNM) lie on the Cytoplasmic side of the membrane. A helical transmembrane segment spans residues 286 to 306 (EVRLIFLSGLCIAVAVVWAVF). Residues 307-311 (RNEDR) are Lumenal-facing. A helical membrane pass occupies residues 312–332 (WAWILQDILGIAFCLNLIKTL). Over 333–340 (KLPNFKSC) the chain is Cytoplasmic. The chain crosses the membrane as a helical span at residues 341–361 (VILLGLLLLYDVFFVFITPFI). Asp351 is an active-site residue. The Lumenal portion of the chain corresponds to 362–399 (TKNGESIMVELAAGPFGNNEKLPVVIRVPKLIYFSVMS). The helical transmembrane segment at 400–420 (VCLMPVSILGFGDIIVPGLLI) threads the bilayer. Asp412 is a catalytic residue. Residues 421-437 (AYCRRFDVQTGSSYIYY) lie on the Cytoplasmic side of the membrane. The chain crosses the membrane as a helical span at residues 438 to 458 (VSSTVAYAIGMILTFVVLVLM). The Lumenal segment spans residues 459 to 460 (KK). Residues 461–481 (GQPALLYLVPCTLITASVVAW) traverse the membrane as a helical segment. Residues 463 to 465 (PAL) carry the PAL motif. Over 482–520 (RRKEMKKFWKGNSYQMMDHLDCATNEENPVISGEQIVQQ) the chain is Cytoplasmic. The YXXo lysosomal targeting motif signature appears at 495–498 (YQMM).

It belongs to the peptidase A22B family. As to quaternary structure, interacts with ITM2B. In terms of processing, glycosylated. As to expression, ubiquitous.

The protein localises to the late endosome membrane. It localises to the lysosome membrane. The protein resides in the membrane. Intramembrane-cleaving aspartic protease (I-CLiP) that cleaves type II membrane signal peptides in the hydrophobic plane of the membrane. Functions in FASLG, ITM2B and TNF processing. Catalyzes the intramembrane cleavage of the anchored fragment of shed TNF-alpha (TNF), which promotes the release of the intracellular domain (ICD) for signaling to the nucleus. Also responsible for the intramembrane cleavage of Fas antigen ligand FASLG, which promotes the release of the intracellular FasL domain (FasL ICD). Essential for degradation of the invariant chain CD74 that plays a central role in the function of antigen-presenting cells in the immune system. Plays a role in the regulation of innate and adaptive immunity. Catalyzes the intramembrane cleavage of the simian foamy virus envelope glycoprotein gp130 independently of prior ectodomain shedding by furin or furin-like proprotein convertase (PC)-mediated cleavage proteolysis. The chain is Signal peptide peptidase-like 2A from Homo sapiens (Human).